The primary structure comprises 518 residues: Lysine--tRNA ligase (518 aa).

Glu407 and Glu414 together coordinate Mg(2+).

Belongs to the class-II aminoacyl-tRNA synthetase family. Homodimer. The cofactor is Mg(2+).

It is found in the cytoplasm. It carries out the reaction tRNA(Lys) + L-lysine + ATP = L-lysyl-tRNA(Lys) + AMP + diphosphate. In Helicobacter hepaticus (strain ATCC 51449 / 3B1), this protein is Lysine--tRNA ligase.